The following is a 301-amino-acid chain: Bifunctional dTDP-4-dehydrorhamnose 3,5-epimerase/dTDP-4-dehydrorhamnose reductase (301 aa).

Residues 23–24 (WI), 69–71 (GVT), and Tyr111 each bind NADPH.

This sequence belongs to the dTDP-4-dehydrorhamnose reductase family. Expressed in roots, leaves, stems and flowers.

The catalysed reaction is dTDP-4-dehydro-6-deoxy-alpha-D-glucose = dTDP-4-dehydro-beta-L-rhamnose. The enzyme catalyses dTDP-beta-L-rhamnose + NADP(+) = dTDP-4-dehydro-beta-L-rhamnose + NADPH + H(+). The protein operates within carbohydrate biosynthesis; dTDP-L-rhamnose biosynthesis. In terms of biological role, bifunctional enzyme involved in dTDP-beta-L-rhamnose biosynthesis. Catalyzes the epimerization of the C3' and C5'positions of dTDP-6-deoxy-4-keto-alpha-D-glucose to form dTDP-4-keto-beta-L-rhamnose and its reduction to yield dTDP-beta-L-rhamnose. Can form UDP-beta-L-rhamnose from UDP-6-deoxy-4-keto-alpha-D-glucose, but cannot convert GDP-4-dehydro-6-deoxy-D-mannose to GDP-fucose. This Arabidopsis thaliana (Mouse-ear cress) protein is Bifunctional dTDP-4-dehydrorhamnose 3,5-epimerase/dTDP-4-dehydrorhamnose reductase.